The sequence spans 155 residues: Interleukin-2 (155 aa).

The signal sequence occupies residues M1 to S20. The O-linked (GalNAc...) threonine glycan is linked to T23. C78 and C126 are joined by a disulfide.

The protein belongs to the IL-2 family.

It localises to the secreted. In terms of biological role, cytokine produced by activated CD4-positive helper T-cells and to a lesser extend activated CD8-positive T-cells and natural killer (NK) cells that plays pivotal roles in the immune response and tolerance. Binds to a receptor complex composed of either the high-affinity trimeric IL-2R (IL2RA/CD25, IL2RB/CD122 and IL2RG/CD132) or the low-affinity dimeric IL-2R (IL2RB and IL2RG). Interaction with the receptor leads to oligomerization and conformation changes in the IL-2R subunits resulting in downstream signaling starting with phosphorylation of JAK1 and JAK3. In turn, JAK1 and JAK3 phosphorylate the receptor to form a docking site leading to the phosphorylation of several substrates including STAT5. This process leads to activation of several pathways including STAT, phosphoinositide-3-kinase/PI3K and mitogen-activated protein kinase/MAPK pathways. Functions as a T-cell growth factor and can increase NK-cell cytolytic activity as well. Promotes strong proliferation of activated B-cells and subsequently immunoglobulin production. Plays a pivotal role in regulating the adaptive immune system by controlling the survival and proliferation of regulatory T-cells, which are required for the maintenance of immune tolerance. Moreover, participates in the differentiation and homeostasis of effector T-cell subsets, including Th1, Th2, Th17 as well as memory CD8-positive T-cells. This Rattus norvegicus (Rat) protein is Interleukin-2 (Il2).